Consider the following 236-residue polypeptide: 2,3,4,5-tetrahydropyridine-2,6-dicarboxylate N-acetyltransferase (236 aa).

It belongs to the transferase hexapeptide repeat family. DapH subfamily.

The enzyme catalyses (S)-2,3,4,5-tetrahydrodipicolinate + acetyl-CoA + H2O = L-2-acetamido-6-oxoheptanedioate + CoA. It participates in amino-acid biosynthesis; L-lysine biosynthesis via DAP pathway; LL-2,6-diaminopimelate from (S)-tetrahydrodipicolinate (acetylase route): step 1/3. Its function is as follows. Catalyzes the transfer of an acetyl group from acetyl-CoA to tetrahydrodipicolinate. The chain is 2,3,4,5-tetrahydropyridine-2,6-dicarboxylate N-acetyltransferase from Limosilactobacillus reuteri (strain DSM 20016) (Lactobacillus reuteri).